Here is a 474-residue protein sequence, read N- to C-terminus: UDP-N-acetylmuramate--L-alanine ligase (474 aa).

ATP is bound at residue 112 to 118 (GTHGKTT).

It belongs to the MurCDEF family.

The protein localises to the cytoplasm. It carries out the reaction UDP-N-acetyl-alpha-D-muramate + L-alanine + ATP = UDP-N-acetyl-alpha-D-muramoyl-L-alanine + ADP + phosphate + H(+). It functions in the pathway cell wall biogenesis; peptidoglycan biosynthesis. Cell wall formation. In Cupriavidus taiwanensis (strain DSM 17343 / BCRC 17206 / CCUG 44338 / CIP 107171 / LMG 19424 / R1) (Ralstonia taiwanensis (strain LMG 19424)), this protein is UDP-N-acetylmuramate--L-alanine ligase.